The following is a 276-amino-acid chain: Acyl-[acyl-carrier-protein]--UDP-N-acetylglucosamine O-acyltransferase (276 aa).

This sequence belongs to the transferase hexapeptide repeat family. LpxA subfamily. As to quaternary structure, homotrimer.

The protein resides in the cytoplasm. The enzyme catalyses a (3R)-hydroxyacyl-[ACP] + UDP-N-acetyl-alpha-D-glucosamine = a UDP-3-O-[(3R)-3-hydroxyacyl]-N-acetyl-alpha-D-glucosamine + holo-[ACP]. It participates in glycolipid biosynthesis; lipid IV(A) biosynthesis; lipid IV(A) from (3R)-3-hydroxytetradecanoyl-[acyl-carrier-protein] and UDP-N-acetyl-alpha-D-glucosamine: step 1/6. In terms of biological role, involved in the biosynthesis of lipid A, a phosphorylated glycolipid that anchors the lipopolysaccharide to the outer membrane of the cell. The sequence is that of Acyl-[acyl-carrier-protein]--UDP-N-acetylglucosamine O-acyltransferase from Rippkaea orientalis (strain PCC 8801 / RF-1) (Cyanothece sp. (strain PCC 8801)).